The chain runs to 84 residues: MSKEKVARFNKQHFVVGLKETLKALKKDQVTSLIIAEDVEVYLMTRVLSQINQKNIPVSFFKSKHALGKHVGINVNATIVALIK.

The protein belongs to the eukaryotic ribosomal protein eL8 family.

The polypeptide is RNA-binding protein SAHV_0542 (Staphylococcus aureus (strain Mu3 / ATCC 700698)).